Reading from the N-terminus, the 394-residue chain is Cell division protein FtsZ (394 aa).

GTP is bound by residues 21–25 (GGGNN), R29, 108–110 (GTG), E139, R143, N166, and D187. Positions 317-394 (DKPSSQGRKA…EERRSRRTRR (78 aa)) are disordered. Composition is skewed to low complexity over residues 328–346 (STGF…SGAS) and 353–364 (SAHTSHSQSSES). Basic and acidic residues predominate over residues 365 to 388 (VSERSHTTKDDDIPSFIRNREERR).

Belongs to the FtsZ family. Homodimer. Polymerizes to form a dynamic ring structure in a strictly GTP-dependent manner. Interacts directly with several other division proteins.

Its subcellular location is the cytoplasm. Essential cell division protein that forms a contractile ring structure (Z ring) at the future cell division site. The regulation of the ring assembly controls the timing and the location of cell division. One of the functions of the FtsZ ring is to recruit other cell division proteins to the septum to produce a new cell wall between the dividing cells. Binds GTP and shows GTPase activity. This Staphylococcus epidermidis (strain ATCC 35984 / DSM 28319 / BCRC 17069 / CCUG 31568 / BM 3577 / RP62A) protein is Cell division protein FtsZ.